The following is a 409-amino-acid chain: Arginine deiminase (409 aa).

Catalysis depends on Cys-399, which acts as the Amidino-cysteine intermediate.

It belongs to the arginine deiminase family.

The protein resides in the cytoplasm. It carries out the reaction L-arginine + H2O = L-citrulline + NH4(+). The protein operates within amino-acid degradation; L-arginine degradation via ADI pathway; carbamoyl phosphate from L-arginine: step 1/2. This is Arginine deiminase from Streptococcus pneumoniae (strain JJA).